The following is a 407-amino-acid chain: Aminomethyltransferase, mitochondrial (407 aa).

Residues 1-29 (MRGGLWQVGQSITRRLGQSDKKTIVRRWY) constitute a mitochondrion transit peptide. Substrate contacts are provided by Glu234, Arg265, and Tyr403.

This sequence belongs to the GcvT family. The glycine cleavage system is composed of four proteins: P, T, L and H.

The protein localises to the mitochondrion. It catalyses the reaction N(6)-[(R)-S(8)-aminomethyldihydrolipoyl]-L-lysyl-[protein] + (6S)-5,6,7,8-tetrahydrofolate = N(6)-[(R)-dihydrolipoyl]-L-lysyl-[protein] + (6R)-5,10-methylene-5,6,7,8-tetrahydrofolate + NH4(+). Its function is as follows. The glycine cleavage system catalyzes the degradation of glycine. The polypeptide is Aminomethyltransferase, mitochondrial (GDCST) (Flaveria trinervia (Clustered yellowtops)).